A 586-amino-acid chain; its full sequence is NADH-quinone oxidoreductase subunit C/D 2 (586 aa).

Residues 1–173 (MKWVNKGTVE…RTDPPSHDFE (173 aa)) are NADH dehydrogenase I subunit C. The tract at residues 197–586 (AELVLNWGPL…LDPVVGETDR (390 aa)) is NADH dehydrogenase I subunit D.

This sequence in the N-terminal section; belongs to the complex I 30 kDa subunit family. It in the C-terminal section; belongs to the complex I 49 kDa subunit family. NDH-1 is composed of 13 different subunits. Subunits NuoB, CD, E, F, and G constitute the peripheral sector of the complex.

It localises to the cell inner membrane. It catalyses the reaction a quinone + NADH + 5 H(+)(in) = a quinol + NAD(+) + 4 H(+)(out). NDH-1 shuttles electrons from NADH, via FMN and iron-sulfur (Fe-S) centers, to quinones in the respiratory chain. The immediate electron acceptor for the enzyme in this species is believed to be ubiquinone. Couples the redox reaction to proton translocation (for every two electrons transferred, four hydrogen ions are translocated across the cytoplasmic membrane), and thus conserves the redox energy in a proton gradient. This chain is NADH-quinone oxidoreductase subunit C/D 2 (nuoC2), found in Aquifex aeolicus (strain VF5).